The chain runs to 554 residues: Pigment biosynthesis transcriptional activator pigB (554 aa).

Positions 1–21 are disordered; the sequence is MFTSSSPEQRKPRQSRQLPGA. Positions 23–40 form a DNA-binding region, zn(2)-C6 fungal-type; it reads CEECRRKKLRCDRQQPQC.

The protein resides in the nucleus. Functionally, transcription factor; part of the gene cluster that mediates the biosynthesis of azaphilone pigments (MonAzPs), a complex mixture of compounds with a common azaphilone skeleton very widely used as food colorants. Positively regulates the expression of the azaphilone pigments (MonAzPs) gene cluster. In Monascus ruber (Mold), this protein is Pigment biosynthesis transcriptional activator pigB.